Reading from the N-terminus, the 207-residue chain is Thiamine-phosphate synthase (207 aa).

Residues 36–40 and Asn68 contribute to the 4-amino-2-methyl-5-(diphosphooxymethyl)pyrimidine site; that span reads QLRMK. Mg(2+) is bound by residues Asp69 and Asp88. Residue Ser106 participates in 4-amino-2-methyl-5-(diphosphooxymethyl)pyrimidine binding. 132-134 is a binding site for 2-[(2R,5Z)-2-carboxy-4-methylthiazol-5(2H)-ylidene]ethyl phosphate; it reads TNT. Lys135 contributes to the 4-amino-2-methyl-5-(diphosphooxymethyl)pyrimidine binding site. 2-[(2R,5Z)-2-carboxy-4-methylthiazol-5(2H)-ylidene]ethyl phosphate-binding positions include Gly162 and 182 to 183; that span reads VS.

The protein belongs to the thiamine-phosphate synthase family. It depends on Mg(2+) as a cofactor.

The catalysed reaction is 2-[(2R,5Z)-2-carboxy-4-methylthiazol-5(2H)-ylidene]ethyl phosphate + 4-amino-2-methyl-5-(diphosphooxymethyl)pyrimidine + 2 H(+) = thiamine phosphate + CO2 + diphosphate. It carries out the reaction 2-(2-carboxy-4-methylthiazol-5-yl)ethyl phosphate + 4-amino-2-methyl-5-(diphosphooxymethyl)pyrimidine + 2 H(+) = thiamine phosphate + CO2 + diphosphate. It catalyses the reaction 4-methyl-5-(2-phosphooxyethyl)-thiazole + 4-amino-2-methyl-5-(diphosphooxymethyl)pyrimidine + H(+) = thiamine phosphate + diphosphate. The protein operates within cofactor biosynthesis; thiamine diphosphate biosynthesis; thiamine phosphate from 4-amino-2-methyl-5-diphosphomethylpyrimidine and 4-methyl-5-(2-phosphoethyl)-thiazole: step 1/1. Its function is as follows. Condenses 4-methyl-5-(beta-hydroxyethyl)thiazole monophosphate (THZ-P) and 2-methyl-4-amino-5-hydroxymethyl pyrimidine pyrophosphate (HMP-PP) to form thiamine monophosphate (TMP). In Methanococcus maripaludis (strain C7 / ATCC BAA-1331), this protein is Thiamine-phosphate synthase.